We begin with the raw amino-acid sequence, 553 residues long: Solute carrier family 45 member 3 (553 aa).

Helical transmembrane passes span 19 to 39 (LLVN…ITYV), 52 to 72 (FMTM…PLLG), 88 to 108 (FIWA…RAGW), 120 to 140 (LELA…QVCF), 161 to 181 (FSVY…LPAI), 198 to 218 (CLFG…LFVT), 275 to 295 (FVAE…YTDF), 323 to 343 (MGSL…LVMD), 353 to 373 (SVYL…CLSH), 382 to 402 (AALT…LASL), and 522 to 542 (AYMV…TQVV).

It belongs to the glycoside-pentoside-hexuronide (GPH) cation symporter transporter (TC 2.A.2) family. As to expression, expressed in the epididymis. Primarily expressed in the prostate, but also in other tissues.

The protein localises to the membrane. It carries out the reaction sucrose(out) + H(+)(out) = sucrose(in) + H(+)(in). In terms of biological role, proton-associated sucrose transporter. May be able to transport also glucose and fructose. This chain is Solute carrier family 45 member 3 (Slc45a3), found in Mus musculus (Mouse).